Consider the following 1431-residue polypeptide: MTKPIFKSKTKPLGWSKISSKEVINEDEEEEEGGEEGGEEEEIDNNKNSNNSSSNSNNNNNDNNNNNGEERKVEKEEEKEEINHYRNQFEKDLLDMELKALNRETIDNILSGLNSYEIFKEVNFDFEKLYSIIISEPPPLFDTFFDSVSSFEIFFTDCLILLCSNFPDGIDTSITRPNFNDFYNHFKDRGVINKYISRENIHKALNDKLMTDYFNSGIYLGLLDTLDIAAIRFITIFGKFLSYEVVETISNSLFRYRTDKIEFLSDIIRELLLCNEKYRTLSKSYDLVQKRLQKEEFTFIKVFEDDDPKLFSALYQPPDIIKLITEPEKDSGFWCMIGIFKSKRILDYLIRTEPSKSWFKGKESDYFFSIAEMGGKYFNWTLLEPKLIKKEVNQKSLKGVIPPRELNSQQRNTQFFRVFNGVTGFNDIRFVYANPSLAQHAIKFIQKVTECGLFLNTDVRNVRDSIPNSNSFLFRKFLEVNFFYRYEKDNEVYQHQPTEENSLLYSTSIISRIVEMEVTDLLSVVLKNLTQQGCSLAREAVDERSLLSTIHSDKYYNSSIVVLHNYWPIPPKFCDCSTSFISMANGKLPRTYSGSDGVIPYIFFARNHLTLGFLLSIHNNITDTIDINHWISVAISGGLYYDKEEIFRKYPLLQKESTLQKYPRPVNILEFQTLLENNECIEYIARTFIKEIPPHEVPTVKHSDLLILFEISVMKKRSIRSKESLQAELDLIEEEKREKKKQKDKKKNKSNQNQKNNNNQNNQSNNNKINSPSSNKLTQNVTPPSSPVNIITSSSTTSSSTSSTTSSTTSSTIEPKPPTQTLPIKTSSPTKPESQKPSTPDPLIPKSSKSTTKNNNNNNNNNNNNNNNNNNNNNNNNNKENREMALEVINEMEKIEIEESLLSTSSLVQPQQQSQQSQQQQEQQQQQQQQQQQQQQQQQQQQQQQQQQQQQQEKQQEQQEQQESIQLNQTLTPIIPDFQIGKFKFSRDENNIIGRGSNGTLVFRGIWNDRIPVAVKQMQKAFNPHISKEIEVLIRLTSNNCSNMIRYIDQEEDQLFVYLGLTLCEESLQDLMESKRYKEFIEKTTTTNITTTFNNNIIDENLYEQRILSLFKDVINGINFLHCQDIVHNDLNPRNILVHKGNFVISDLGLSKMQVETSYSFTNNAPTGQEGYHPIEVLQEKRKTKSVDIFSLGCILFYLLTNGQHPFGNNKLLRVANIVYDKPDLEPLKFNAPALDLVRLMISQDEKKRPTIDTILNHPLFWSTNEKIKFYESSLNLLKDPNNSQSKHSKLLNYYQNDNSGGVLFLSKPWNQIIDPFLIDHVENNNNNNNNNNNNKQNSKKLAIVAYQYDQVRDLVRCIRNSLVHHKDILRSITQQQNLPPSSKEFANDCLKSQESVLLYFECKFPDLLFHLYQQFKKSDFNSKDYLNIKF.

Residues 1-10 (MTKPIFKSKT) are compositionally biased toward basic residues. Disordered stretches follow at residues 1–81 (MTKP…EKEE) and 736–879 (KREK…NNNK). Positions 25–43 (NEDEEEEEGGEEGGEEEEI) are enriched in acidic residues. The segment covering 46–67 (NKNSNNSSSNSNNNNNDNNNNN) has biased composition (low complexity). Coiled-coil stretches lie at residues 57–97 (NNNN…LDME) and 715–759 (KKRS…NNNN). Residues 68-81 (GEERKVEKEEEKEE) show a composition bias toward basic and acidic residues. The span at 738 to 749 (EKKKQKDKKKNK) shows a compositional bias: basic residues. The span at 750–776 (SNQNQKNNNNQNNQSNNNKINSPSSNK) shows a compositional bias: low complexity. The segment covering 777–791 (LTQNVTPPSSPVNII) has biased composition (polar residues). The span at 792–812 (TSSSTTSSSTSSTTSSTTSST) shows a compositional bias: low complexity. Polar residues predominate over residues 821 to 838 (TLPIKTSSPTKPESQKPS). The segment covering 854–878 (NNNNNNNNNNNNNNNNNNNNNNNNN) has biased composition (low complexity). Residues 860 to 971 (NNNNNNNNNN…QESIQLNQTL (112 aa)) adopt a coiled-coil conformation. In terms of domain architecture, Protein kinase spans 987-1261 (RDENNIIGRG…IDTILNHPLF (275 aa)). ATP-binding positions include 993–1001 (IGRGSNGTL) and Lys-1016. Residue Asp-1130 is the Proton acceptor of the active site. The 168-residue stretch at 1264-1431 (TNEKIKFYES…NSKDYLNIKF (168 aa)) folds into the KEN domain.

The protein belongs to the protein kinase superfamily. Ser/Thr protein kinase family.

It carries out the reaction L-seryl-[protein] + ATP = O-phospho-L-seryl-[protein] + ADP + H(+). The catalysed reaction is L-threonyl-[protein] + ATP = O-phospho-L-threonyl-[protein] + ADP + H(+). The chain is Probable serine/threonine-protein kinase irlA (irlA) from Dictyostelium discoideum (Social amoeba).